Here is a 127-residue protein sequence, read N- to C-terminus: Holo-[acyl-carrier-protein] synthase (127 aa).

Mg(2+) is bound by residues aspartate 9 and glutamate 58.

The protein belongs to the P-Pant transferase superfamily. AcpS family. Mg(2+) serves as cofactor.

Its subcellular location is the cytoplasm. The enzyme catalyses apo-[ACP] + CoA = holo-[ACP] + adenosine 3',5'-bisphosphate + H(+). Its function is as follows. Transfers the 4'-phosphopantetheine moiety from coenzyme A to a Ser of acyl-carrier-protein. The polypeptide is Holo-[acyl-carrier-protein] synthase (Shewanella sp. (strain ANA-3)).